The sequence spans 129 residues: Small ribosomal subunit protein uS11 (129 aa).

Residues 108–129 (TPIPHNGTRPPKRVLKRLRLKK) are disordered. The segment covering 117–129 (PPKRVLKRLRLKK) has biased composition (basic residues).

Belongs to the universal ribosomal protein uS11 family. Part of the 30S ribosomal subunit. Interacts with proteins S7 and S18. Binds to IF-3.

In terms of biological role, located on the platform of the 30S subunit, it bridges several disparate RNA helices of the 16S rRNA. Forms part of the Shine-Dalgarno cleft in the 70S ribosome. This is Small ribosomal subunit protein uS11 from Mycoplasmopsis synoviae (strain 53) (Mycoplasma synoviae).